The primary structure comprises 404 residues: V-set and immunoglobulin domain-containing protein 1 (404 aa).

Residues 1–22 (MMVFAFWKVFLILNCLAGQVNM) form the signal peptide. The region spanning 23 to 133 (VQVTIPDTFV…DFFGKNQGIL (111 aa)) is the Ig-like V-type domain. Residues 23 to 233 (VQVTIPDTFV…EIDLTSSDPE (211 aa)) lie on the Extracellular side of the membrane. N39 is a glycosylation site (N-linked (GlcNAc...) asparagine). Cystine bridges form between C44–C117 and C162–C212. An Ig-like C2-type domain is found at 141–228 (PSKPFCSIQG…GNSSCEIDLT (88 aa)). N-linked (GlcNAc...) asparagine glycosylation is found at N201 and N220. The helical transmembrane segment at 234 to 254 (VGIIIGALVGALTGAAIIICV) threads the bilayer. At 255–404 (VYFARNKVKS…REEEKETVKA (150 aa)) the chain is on the cytoplasmic side. Disordered stretches follow at residues 266-285 (QKNL…HHSR) and 298-404 (EGTL…TVKA). Residues S271 and S272 each carry the phosphoserine modification. The segment covering 301–314 (LPSSIHASHNTEPT) has biased composition (polar residues). Positions 357–383 (MELEPETEPEPEPEPEPQPELESELEP) are enriched in acidic residues. Over residues 393 to 404 (PMREEEKETVKA) the composition is skewed to basic and acidic residues.

It localises to the membrane. The protein is V-set and immunoglobulin domain-containing protein 1 (Vsig1) of Rattus norvegicus (Rat).